The chain runs to 142 residues: Small ribosomal subunit protein uS11 (142 aa).

The tract at residues 1-21 (MPPKTRGAVRKPRRKDKKNIA) is disordered. Residues 7–17 (GAVRKPRRKDK) show a composition bias toward basic residues.

Belongs to the universal ribosomal protein uS11 family. As to quaternary structure, part of the 30S ribosomal subunit. Interacts with proteins S7 and S18. Binds to IF-3.

Its function is as follows. Located on the platform of the 30S subunit, it bridges several disparate RNA helices of the 16S rRNA. Forms part of the Shine-Dalgarno cleft in the 70S ribosome. This chain is Small ribosomal subunit protein uS11, found in Paenarthrobacter aurescens (strain TC1).